A 426-amino-acid chain; its full sequence is C4-dicarboxylate transport protein (426 aa).

Transmembrane regions (helical) follow at residues 8–28, 44–64, 78–98, 148–168, 184–204, 222–242, 297–317, and 355–375; these read VLYV…HFYP, LIKM…IAGM, LLYF…ATHL, GEIL…AHVG, ILFG…FGAM, LIGT…GFIA, GYSF…LFIA, and AATL…ILGI.

Belongs to the dicarboxylate/amino acid:cation symporter (DAACS) (TC 2.A.23) family.

It is found in the cell inner membrane. Its function is as follows. Responsible for the transport of dicarboxylates such as succinate, fumarate, and malate from the periplasm across the membrane. This Paraburkholderia phymatum (strain DSM 17167 / CIP 108236 / LMG 21445 / STM815) (Burkholderia phymatum) protein is C4-dicarboxylate transport protein.